The sequence spans 891 residues: MSSTLREASKDTLQAKDKTYHYYSLPLAAKSLGDITRLPKSLKVLLENLLRWQDGNSVTEEDIHALAGWLKNAHADREIAYRPARVLMQDFTGVPAVVDLAAMREAVKRLGGDTAKVNPLSPVDLVIDHSVTVDRFGDDEAFEENVRLEMERNHERYVFLKWGKQAFSRFSVVPPGTGICHQVNLEYLGKAVWSELQDGEWIAYPDTLVGTDSHTTMINGLGVLGWGVGGIEAEAAMLGQPVSMLIPDVVGFKLTGKLREGITATDLVLTVTQMLRKHGVVGKFVEFYGDGLDSLPLADRATIANMSPEYGATCGFFPIDAVTLDYMRLSGRSEDQVELVEKYAKAQGMWRNPGDEPIFTSTLELDMNDVEASLAGPKRPQDRVALPDVPKAFAASNELEVNATHKDRQPVDYVMNGHQYQLPDGAVVIAAITSCTNTSNPSVLMAAGLLAKKAVTLGLKRQPWVKASLAPGSKVVSDYLAKAKLTPYLDELGFNLVGYGCTTCIGNSGPLPDPIETAIKKSDLTVGAVLSGNRNFEGRIHPLVKTNWLASPPLVVAYALAGNMNINLASEPIGHDRKGDPVYLKDIWPSAQEIARAVEQVSTEMFRKEYAEVFEGTAEWKGINVTRSDTYGWQEDSTYIRLSPFFDEMQATPAPVEDIHGARILAMLGDSVTTDHISPAGSIKPDSPAGRYLQGRGVERKDFNSYGSRRGNHEVMMRGTFANIRIRNEMVPGVEGGMTRHLPDSDVVSIYDAAMRYKQEQTPLAVIAGKEYGSGSSRDWAAKGPRLLGIRVVIAESFERIHRSNLIGMGILPLEFPQGVTRKTLGLTGEEKIDIGDLQNLQPGATVPVTLTRADGSQEVVPCRCRIDTATELTYYQNDGILHYVIRNMLK.

Residues Cys-435, Cys-501, and Cys-504 each coordinate [4Fe-4S] cluster.

It belongs to the aconitase/IPM isomerase family. As to quaternary structure, monomer. It depends on [4Fe-4S] cluster as a cofactor.

It carries out the reaction citrate = D-threo-isocitrate. It participates in carbohydrate metabolism; tricarboxylic acid cycle; isocitrate from oxaloacetate: step 2/2. Functionally, catalyzes the reversible isomerization of citrate to isocitrate via cis-aconitate. The apo form of AcnA functions as a RNA-binding regulatory protein which plays a role as a maintenance or survival enzyme during nutritional or oxidative stress. During oxidative stress inactive AcnA apo-enzyme without iron sulfur clusters binds the acnA mRNA 3' UTRs (untranslated regions), stabilizes acnA mRNA and increases AcnA synthesis, thus mediating a post-transcriptional positive autoregulatory switch. AcnA also enhances the stability of the sodA transcript. This chain is Aconitate hydratase A, found in Escherichia coli (strain K12).